Here is a 241-residue protein sequence, read N- to C-terminus: MTFSRPSGRTADQLRPVRIERSFTRHAEGSVLVSFGDTRVLCTASVENRVPGFLRGKGEGWVTAEYGMLPRSTHTRSDREAARGKQGGRTLEIQRLIGRALRACVDRNALGERTITLDCDVLQADGGTRTAAITGAYVALADAVNLLIKRGDIKKHPLIGAVAAVSVGIYRGEPVLDLDYPEDSDCDTDMNVVMNDGGGFIELQGTAEGHAFRRDELNALLALAEKGMGELFALQRAALAG.

Residues arginine 89 and 127–129 contribute to the phosphate site; that span reads GTR.

It belongs to the RNase PH family. As to quaternary structure, homohexameric ring arranged as a trimer of dimers.

The enzyme catalyses tRNA(n+1) + phosphate = tRNA(n) + a ribonucleoside 5'-diphosphate. Its function is as follows. Phosphorolytic 3'-5' exoribonuclease that plays an important role in tRNA 3'-end maturation. Removes nucleotide residues following the 3'-CCA terminus of tRNAs; can also add nucleotides to the ends of RNA molecules by using nucleoside diphosphates as substrates, but this may not be physiologically important. Probably plays a role in initiation of 16S rRNA degradation (leading to ribosome degradation) during starvation. This Xanthomonas axonopodis pv. citri (strain 306) protein is Ribonuclease PH.